A 310-amino-acid polypeptide reads, in one-letter code: Prephenate dehydratase (310 aa).

Positions 3 to 190 (RIAYLGPEGT…ARTRFVLVGL (188 aa)) constitute a Prephenate dehydratase domain. Positions 204-281 (AVVLRLVNEP…VDVRYLGSWP (78 aa)) constitute an ACT domain.

As to quaternary structure, homodimer.

It catalyses the reaction prephenate + H(+) = 3-phenylpyruvate + CO2 + H2O. It functions in the pathway amino-acid biosynthesis; L-phenylalanine biosynthesis; phenylpyruvate from prephenate: step 1/1. This chain is Prephenate dehydratase (pheA), found in Mycolicibacterium smegmatis (strain ATCC 700084 / mc(2)155) (Mycobacterium smegmatis).